An 879-amino-acid chain; its full sequence is MKQLSSAEVRQLFLDFFKEKGHTIEPSAPLVPNNDPTILWINSGVATMKKYFDGSVIPDNPRMANAQKSIRTNDIENVGKTARHHTFFEMLGNFSIGDYFKEGAIVFAWEFLTSPKWIGFDPDKLYVTVYPEDEEAKTIWREKIGLSEEHIVEIEDNFWDIGIGPSGPDSEIFYDRGPTFGDDTSDPELYPGGENERYLEIWNLVFSQFNHNPDGTYTPLPKQNIDTGMGLERMVSIIQDAPTNFETDLFMPIIREVEQIAGVKYGHNQENDVAFKVIADHIRTVAFAIGDGALPSNEGRGYILRRLLRRAVRYAKVLTINEPFMYKLVPVVGKIMNSFYPEVENQTDFIQKVIRTEEERFHETLNEGLAILETILKTAKETNEQVIKGADIFKLYDTFGFPVELTEEYAEDHGLKVDHAGFEAEMKEQRDRARSARADVKSMQVQGELLANLTAKSEFVGYNATEHVSEILYIIQDDALVDEVASGKTAQVIFKETPFYAESGGQVADKGTIESETGLAYVEDVQKAPNKQNLHRISVKEGVLKTGDTVKLAVDKVKRRETIKNHTATHLLHRALKDTLGEHVNQAGSLVSPDRLRFDFSHFGQITEEELTKMEEIVNEKIWEQINVVIEEMPIAEAKELGAMALFGEKYGDVVRVVQVGKYSIELCGGVHVRNTADIGLFKIVSETGIGAGTRRIEAVTGKEAYRFVTEQENTLKHTANLLKATTKEAPQKVEQLQADLREVKRENESLLSKLASAASADIFESPEEIGGVKVIAKQVNAKDMNQLRQFVDNWKDKKIGGILVLGAVQGEKVNLISAVSEDAIKAGYHAGKLLKEVATKCGGNGGGRPDMAQAGGKNPAELATALDYVSTCVKEQQA.

Zn(2+)-binding residues include His-566, His-570, Cys-668, and His-672.

Belongs to the class-II aminoacyl-tRNA synthetase family. The cofactor is Zn(2+).

It is found in the cytoplasm. It carries out the reaction tRNA(Ala) + L-alanine + ATP = L-alanyl-tRNA(Ala) + AMP + diphosphate. Functionally, catalyzes the attachment of alanine to tRNA(Ala) in a two-step reaction: alanine is first activated by ATP to form Ala-AMP and then transferred to the acceptor end of tRNA(Ala). Also edits incorrectly charged Ser-tRNA(Ala) and Gly-tRNA(Ala) via its editing domain. The polypeptide is Alanine--tRNA ligase (Listeria welshimeri serovar 6b (strain ATCC 35897 / DSM 20650 / CCUG 15529 / CIP 8149 / NCTC 11857 / SLCC 5334 / V8)).